A 527-amino-acid chain; its full sequence is Neutrophil cytosol factor 2 (527 aa).

3 TPR repeats span residues 37 to 70 (SRICFNVGCIYTILGNLPEAEKAFTKSINRDKHL), 71 to 104 (AVSYFQRGMLYYQMEKYDSAIKDLKEALTQLRGN), and 121 to 154 (CEVLYNIAFMYAKREEWKKAEEHLALAVSMKSEP). Threonine 233 is subject to Phosphothreonine. Residues 240–299 (LEGEAHRVLFGFVPETPEELQVMPGNIVFVLKKGNDNWATVMFNGQKGLVPCNYLEPVEL) form the SH3 1 domain. A disordered region spans residues 304-345 (QQQPQEETSLESDIPAPPSSSAPGRPQLSPGQKGKEEPKQEI). Serine 324 is subject to Phosphoserine. A compositionally biased stretch (basic and acidic residues) spans 336–345 (KGKEEPKQEI). The PB1 domain occupies 352 to 430 (SYTLKVHYKY…YCLTLWCENT (79 aa)). Serine 400 is subject to Phosphoserine. The interval 434–457 (QGFPDEPEESKKSDANNQTTEPEL) is disordered. The 60-residue stretch at 458–517 (KEGSKVVALFSYEATQPEDLEFLEGDVILVISTVNEQWLEGECKGKVGIFPKAFVEQHPT) folds into the SH3 2 domain.

Belongs to the NCF2/NOXA1 family. As to quaternary structure, component of the phagocyte NADPH oxidase complex composed of an obligatory core heterodimer formed by the membrane proteins CYBA and CYBB and the cytosolic regulatory subunits NCF1/p47-phox, NCF2/p67-phox, NCF4/p40-phox and the small GTPase RAC1 or RAC2. Part of a cytosolic complex composed at least by NCF1, NCF2 and NCF4. Interacts with NCF4. Interacts (via the C-terminal SH3 domain) with NCF1 (via C-terminus). Interacts with SYTL1 and RAC1. May interact with NOXO1. Interacts with S100A8 and calprotectin (S100A8/9). Interacts with GBP7 (via GB1/RHD3-type G domain). Interacts with CYBB; the interaction is enhanced in the presence of GBP7.

The protein localises to the cytoplasm. Functionally, subunit of the phagocyte NADPH oxidase complex that mediates the transfer of electrons from cytosolic NADPH to O2 to produce the superoxide anion (O2(-)). In the activated complex, electrons are first transferred from NADPH to flavin adenine dinucleotide (FAD) and subsequently transferred via two heme molecules to molecular oxygen, producing superoxide through an outer-sphere reaction. Activation of the NADPH oxidase complex is initiated by the assembly of cytosolic subunits of the NADPH oxidase complex with the core NADPH oxidase complex to form a complex at the plasma membrane or phagosomal membrane. This activation process is initiated by phosphorylation dependent binding of the cytosolic NCF1/p47-phox subunit to the C-terminus of CYBA/p22-phox. This chain is Neutrophil cytosol factor 2, found in Bos taurus (Bovine).